The following is a 129-amino-acid chain: Lysozyme C-2 (129 aa).

The C-type lysozyme domain occupies Lys-1 to Leu-129. 4 disulfides stabilise this stretch: Cys-6/Cys-127, Cys-30/Cys-115, Cys-65/Cys-81, and Cys-77/Cys-95. Active-site residues include Glu-35 and Asp-53.

The protein belongs to the glycosyl hydrolase 22 family. In terms of assembly, monomer.

It catalyses the reaction Hydrolysis of (1-&gt;4)-beta-linkages between N-acetylmuramic acid and N-acetyl-D-glucosamine residues in a peptidoglycan and between N-acetyl-D-glucosamine residues in chitodextrins.. Its function is as follows. Lysozymes have primarily a bacteriolytic function; those in tissues and body fluids are associated with the monocyte-macrophage system and enhance the activity of immunoagents. The sequence is that of Lysozyme C-2 from Capra hircus (Goat).